A 98-amino-acid polypeptide reads, in one-letter code: Small ribosomal subunit protein uS19 (98 aa).

Disordered regions lie at residues 1–30 and 78–98; these read MARS…KKSV and RTFH…PAKK. Residues 9–24 show a composition bias toward basic and acidic residues; sequence PFADKHLTKKVEDANK.

The protein belongs to the universal ribosomal protein uS19 family.

Functionally, protein S19 forms a complex with S13 that binds strongly to the 16S ribosomal RNA. This chain is Small ribosomal subunit protein uS19, found in Anaeromyxobacter dehalogenans (strain 2CP-1 / ATCC BAA-258).